The chain runs to 64 residues: Prokaryotic ubiquitin-like protein Pup (64 aa).

A compositionally biased stretch (basic and acidic residues) spans 1–11; that stretch reads MAQEQTKRGGG. Residues 1–36 form a disordered region; the sequence is MAQEQTKRGGGGDDDDVTDLGGPAGQERREKLAEDT. The interval 21-58 is ARC ATPase binding; sequence GGPAGQERREKLAEDTDDLLDEIDDVLEENAEDFVRAY. A coiled-coil region spans residues 24–52; that stretch reads AGQERREKLAEDTDDLLDEIDDVLEENAE. Gln64 bears the Deamidated glutamine mark. Residue Gln64 forms an Isoglutamyl lysine isopeptide (Gln-Lys) (interchain with K-? in acceptor proteins) linkage.

This sequence belongs to the prokaryotic ubiquitin-like protein family. In terms of assembly, strongly interacts with the proteasome-associated ATPase ARC through a hydrophobic interface; the interacting region of Pup lies in its C-terminal half. There is one Pup binding site per ARC hexamer ring. In terms of processing, is modified by deamidation of its C-terminal glutamine to glutamate by the deamidase Dop, a prerequisite to the subsequent pupylation process.

It participates in protein degradation; proteasomal Pup-dependent pathway. Functionally, protein modifier that is covalently attached to lysine residues of substrate proteins, thereby targeting them for proteasomal degradation. The tagging system is termed pupylation. The sequence is that of Prokaryotic ubiquitin-like protein Pup from Mycobacteroides abscessus (strain ATCC 19977 / DSM 44196 / CCUG 20993 / CIP 104536 / JCM 13569 / NCTC 13031 / TMC 1543 / L948) (Mycobacterium abscessus).